The sequence spans 98 residues: Derivative of benzaldehyde biosynthesis cluster protein C (98 aa).

It belongs to the YciI family.

Its pathway is secondary metabolite biosynthesis. In terms of biological role, part of the gene cluster that mediates the biosynthesis of the antibiotic 2,4-dihydroxy-3-methyl-6-(2-oxopropyl)benzaldehyde (DHMBA) and its derivatives. The direct non-reducing polyketide synthase dbaI product is 2,4-dihydroxy-3-methyl-6-(2-oxopropyl)benzaldehyde (DHMBA), produced by condensation of one acetyl-CoA starter unit with 4 malonyl-CoA units and one methylation step. The FAD-dependent monooxygenase dbaH is responsible for the synthesis of yellow pigments derived from the oxidation of DHMBA. The roles of dbaB, C, E and F have still to be determined. This Emericella nidulans (strain FGSC A4 / ATCC 38163 / CBS 112.46 / NRRL 194 / M139) (Aspergillus nidulans) protein is Derivative of benzaldehyde biosynthesis cluster protein C.